The primary structure comprises 161 residues: uncharacterized protein (161 aa).

It to M.thermoautotrophicum MTH862.

This is an uncharacterized protein from Methanocaldococcus jannaschii (strain ATCC 43067 / DSM 2661 / JAL-1 / JCM 10045 / NBRC 100440) (Methanococcus jannaschii).